The following is an 86-amino-acid chain: Small ribosomal subunit protein bS16 (86 aa).

This sequence belongs to the bacterial ribosomal protein bS16 family.

This Hamiltonella defensa subsp. Acyrthosiphon pisum (strain 5AT) protein is Small ribosomal subunit protein bS16.